Reading from the N-terminus, the 549-residue chain is Tigger transposable element-derived protein 7 (549 aa).

The region spanning 1–52 (MNKRGKYTTLNLEEKMKVLSRIEAGRSLKSVMDEFGISKSTFYDIKKNKKLI) is the HTH psq-type domain. DNA-binding regions (H-T-H motif) lie at residues 28–48 (LKSVMDEFGISKSTFYDIKKN) and 101–132 (VELQAAAERFARCFGRTDFKASTGWLFRFRNR). Residues 68–139 (KRKRTTGAKY…RNRHAIGNRK (72 aa)) enclose the HTH CENPB-type domain. In terms of domain architecture, DDE-1 spans 169–399 (LCLAQLYSGD…VKQITIANAW (231 aa)). The tract at residues 527–549 (FLKPRPHNIKDSFSGPSTSGSNH) is disordered. Residues 540–549 (SGPSTSGSNH) are compositionally biased toward polar residues.

It belongs to the tigger transposable element derived protein family. Expressed in all tissues tested. Higher expression in testis and ovary.

The protein localises to the nucleus. This is Tigger transposable element-derived protein 7 (TIGD7) from Homo sapiens (Human).